The chain runs to 62 residues: UPF0337 protein XCC0070 (62 aa).

The interval 32–62 (LEGAAEKNIGKVQRKAGELADDVRDATKSTR) is disordered.

Belongs to the UPF0337 (CsbD) family.

This chain is UPF0337 protein XCC0070, found in Xanthomonas campestris pv. campestris (strain ATCC 33913 / DSM 3586 / NCPPB 528 / LMG 568 / P 25).